The following is a 230-amino-acid chain: Large ribosomal subunit protein uL1 (230 aa).

This sequence belongs to the universal ribosomal protein uL1 family. As to quaternary structure, part of the 50S ribosomal subunit.

Binds directly to 23S rRNA. The L1 stalk is quite mobile in the ribosome, and is involved in E site tRNA release. Functionally, protein L1 is also a translational repressor protein, it controls the translation of the L11 operon by binding to its mRNA. The chain is Large ribosomal subunit protein uL1 from Bradyrhizobium sp. (strain ORS 278).